The following is a 332-amino-acid chain: Mitoferrin-1 (332 aa).

3 Solcar repeats span residues 31–119, 129–213, and 220–314; these read ASLG…IKRS, NSHI…MQEH, and YRPE…FKYF. The next 6 helical transmembrane spans lie at 33–52, 94–113, 131–150, 188–207, 222–241, and 289–308; these read LGTH…TVMY, GLNI…FACY, HIAN…AVMN, SYST…FITY, PETH…AVTT, and GIQA…WSVY.

Belongs to the mitochondrial carrier (TC 2.A.29) family. As to expression, highly expressed in hematopoietic organs, Expressed in the intermediate cell mass (ICM), a tissue equivalent to the mammalian extraembryonic yolk-sac blood islands. Colocalizes with gata1.

Its subcellular location is the mitochondrion inner membrane. The enzyme catalyses Fe(2+)(in) = Fe(2+)(out). In terms of biological role, mitochondrial iron transporter that specifically mediates iron uptake in developing erythroid cells, thereby playing an essential role in heme biosynthesis. The protein is Mitoferrin-1 (slc25a37) of Danio rerio (Zebrafish).